A 693-amino-acid polypeptide reads, in one-letter code: Polyribonucleotide nucleotidyltransferase (693 aa).

2 residues coordinate Mg(2+): D485 and D491. The KH domain maps to 552-611; the sequence is PRIMVLEINPSKIGDLIGPSGKNIKKIIEETHTTINIKPEGLVYISAPDQESAEKAAQMV. Residues 621–691 enclose the S1 motif domain; sequence GDIFLGKVIR…SSGRISLTRK (71 aa).

This sequence belongs to the polyribonucleotide nucleotidyltransferase family. It depends on Mg(2+) as a cofactor.

It is found in the cytoplasm. It carries out the reaction RNA(n+1) + phosphate = RNA(n) + a ribonucleoside 5'-diphosphate. Its function is as follows. Involved in mRNA degradation. Catalyzes the phosphorolysis of single-stranded polyribonucleotides processively in the 3'- to 5'-direction. In Dictyoglomus thermophilum (strain ATCC 35947 / DSM 3960 / H-6-12), this protein is Polyribonucleotide nucleotidyltransferase.